We begin with the raw amino-acid sequence, 348 residues long: Major outer membrane protein P.IB (348 aa).

Residues 1-19 (MKKSLIALTLAALPVAAMA) form the signal peptide.

Belongs to the Gram-negative porin family. As to quaternary structure, homotrimer.

Its subcellular location is the cell outer membrane. Its function is as follows. Serves as a slightly cation selective porin. Major antigen on the gonococcal cell surface and it may have pathogenic properties in addition to its porin activity. This is Major outer membrane protein P.IB (porB) from Neisseria gonorrhoeae.